The following is a 291-amino-acid chain: Aliphatic sulfonates import ATP-binding protein SsuB 2 (291 aa).

The ABC transporter domain occupies 26–247 (LRVRGIAKRY…APGLPALASI (222 aa)). 58 to 65 (GRSGCGKS) is an ATP binding site. The disordered stretch occupies residues 264–291 (PAAPKAQTRHGPPRGATAQDTSPLQRIL). Residues 281 to 291 (AQDTSPLQRIL) are compositionally biased toward polar residues.

It belongs to the ABC transporter superfamily. Aliphatic sulfonates importer (TC 3.A.1.17.2) family. In terms of assembly, the complex is composed of two ATP-binding proteins (SsuB), two transmembrane proteins (SsuC) and a solute-binding protein (SsuA).

It localises to the cell inner membrane. The enzyme catalyses ATP + H2O + aliphatic sulfonate-[sulfonate-binding protein]Side 1 = ADP + phosphate + aliphatic sulfonateSide 2 + [sulfonate-binding protein]Side 1.. In terms of biological role, part of the ABC transporter complex SsuABC involved in aliphatic sulfonates import. Responsible for energy coupling to the transport system. This is Aliphatic sulfonates import ATP-binding protein SsuB 2 from Xanthomonas axonopodis pv. citri (strain 306).